The following is a 225-amino-acid chain: Ribonuclease 3 (225 aa).

The RNase III domain maps to 5 to 127 (IEKLTRQLGY…IIGAVYLDSD (123 aa)). Glu-40 contacts Mg(2+). The active site involves Asp-44. The Mg(2+) site is built by Asp-113 and Glu-116. The active site involves Glu-116. The 71-residue stretch at 154-224 (DPKTRLQEFL…AELALEQLTN (71 aa)) folds into the DRBM domain.

This sequence belongs to the ribonuclease III family. As to quaternary structure, homodimer. Requires Mg(2+) as cofactor.

It is found in the cytoplasm. The catalysed reaction is Endonucleolytic cleavage to 5'-phosphomonoester.. Its function is as follows. Digests double-stranded RNA. Involved in the processing of primary rRNA transcript to yield the immediate precursors to the large and small rRNAs (23S and 16S). Processes some mRNAs, and tRNAs when they are encoded in the rRNA operon. Processes pre-crRNA and tracrRNA of type II CRISPR loci if present in the organism. The protein is Ribonuclease 3 of Vibrio vulnificus (strain CMCP6).